The chain runs to 86 residues: Cell division topological specificity factor (86 aa).

The protein belongs to the MinE family.

In terms of biological role, prevents the cell division inhibition by proteins MinC and MinD at internal division sites while permitting inhibition at polar sites. This ensures cell division at the proper site by restricting the formation of a division septum at the midpoint of the long axis of the cell. The sequence is that of Cell division topological specificity factor from Polaromonas sp. (strain JS666 / ATCC BAA-500).